The following is a 219-amino-acid chain: Ropporin-1-like protein (219 aa).

Residues 17–54 (PELPDILKQFTKAAIRTQPHDLLQWSAAYFDSLSKGEP) form the RIIa domain.

This sequence belongs to the ropporin family. As to quaternary structure, component of axonemal radial spoke complexes.

It localises to the cell projection. It is found in the cilium. Its subcellular location is the flagellum. In terms of biological role, functions as part of axonemal radial spoke complexes that play an important part in the motility of sperm and cilia. Important for male fertility. Involved in fibrous sheath integrity and sperm motility, plays a role in PKA-dependent signaling processes required for spermatozoa capacitation. In Xenopus laevis (African clawed frog), this protein is Ropporin-1-like protein (ropn1l).